We begin with the raw amino-acid sequence, 364 residues long: Methylthioribose-1-phosphate isomerase (364 aa).

Residues Arg51–Ala53, Arg88, and Gln199 contribute to the substrate site. Asp240 serves as the catalytic Proton donor. Residue Asn250–Lys251 coordinates substrate.

This sequence belongs to the eIF-2B alpha/beta/delta subunits family. MtnA subfamily.

The enzyme catalyses 5-(methylsulfanyl)-alpha-D-ribose 1-phosphate = 5-(methylsulfanyl)-D-ribulose 1-phosphate. It participates in amino-acid biosynthesis; L-methionine biosynthesis via salvage pathway; L-methionine from S-methyl-5-thio-alpha-D-ribose 1-phosphate: step 1/6. In terms of biological role, catalyzes the interconversion of methylthioribose-1-phosphate (MTR-1-P) into methylthioribulose-1-phosphate (MTRu-1-P). The protein is Methylthioribose-1-phosphate isomerase of Cereibacter sphaeroides (strain KD131 / KCTC 12085) (Rhodobacter sphaeroides).